A 906-amino-acid polypeptide reads, in one-letter code: Cadherin-2 (906 aa).

A signal peptide spans 1–25; it reads MCRIVGAPRTLLPLLAALLQASVEA. Residues 26–159 constitute a propeptide that is removed on maturation; sequence SGGIALCKTG…HNGHLQRQKR (134 aa). 2 positions are modified to phosphoserine: Ser96 and Ser135. 5 Cadherin domains span residues 160-267, 268-382, 383-497, 498-603, and 604-714; these read DWVI…RPEF, LHQV…PPEF, TAMS…NPYF, APNP…DNAP, and QVVP…DVDR. Residues 160–724 are Extracellular-facing; that stretch reads DWVIPPINLP…IVGAGLGTGA (565 aa). Residue Glu170 participates in Ca(2+) binding. Asn190 carries N-linked (GlcNAc...) asparagine glycosylation. The Ca(2+) site is built by Asp226, Glu228, Asp259, Met260, Asn261, Asp262, and Asn263. Asn273 carries an N-linked (GlcNAc...) asparagine glycan. Asp293, Asp295, and Asn301 together coordinate Ca(2+). N-linked (GlcNAc...) asparagine glycosylation is present at Asn325. Asp353 contributes to the Ca(2+) binding site. N-linked (GlcNAc...) asparagine glycans are attached at residues Asn402, Asn572, Asn622, Asn651, and Asn692. The chain crosses the membrane as a helical span at residues 725-745; that stretch reads IIAILLCIIILLILVLMFVVW. Residues 746 to 906 are Cytoplasmic-facing; it reads MKRRDKERQA…LADMYGGGDD (161 aa). Residues 863 to 880 show a composition bias toward low complexity; it reads SGSTAGSLSSLNSSSSGG. The segment at 863–884 is disordered; the sequence is SGSTAGSLSSLNSSSSGGEQDY.

As to quaternary structure, homodimer (via extracellular region). Can also form heterodimers with other cadherins (via extracellular region). Dimerization occurs in trans, i.e. with a cadherin chain from another cell. Interacts with CDCP1. Interacts with PCDH8; this complex may also include TAOK2. The interaction with PCDH8 may lead to internalization through TAOK2/p38 MAPK pathway. Identified in a complex containing FGFR4, NCAM1, CDH2, PLCG1, FRS2, SRC, SHC1, GAP43 and CTTN. May interact with OBSCN (via protein kinase domain 2). Interacts with FBXO45. Cleaved by MMP24. Ectodomain cleavage leads to the generation of a soluble 90 kDa N-terminal soluble fragment and a 45 kDa membrane-bound C-terminal fragment 1 (CTF1), which is further cleaved by gamma-secretase into a 35 kDa. Cleavage in neural stem cells by MMP24 affects CDH2-mediated anchorage of neural stem cells to ependymocytes in the adult subependymal zone, leading to modulate neural stem cell quiescence. Post-translationally, may be phosphorylated by OBSCN.

The protein resides in the cell membrane. It is found in the sarcolemma. The protein localises to the cell junction. It localises to the cell surface. Its subcellular location is the desmosome. The protein resides in the adherens junction. Calcium-dependent cell adhesion protein; preferentially mediates homotypic cell-cell adhesion by dimerization with a CDH2 chain from another cell. Cadherins may thus contribute to the sorting of heterogeneous cell types. Acts as a regulator of neural stem cells quiescence by mediating anchorage of neural stem cells to ependymocytes in the adult subependymal zone: upon cleavage by MMP24, CDH2-mediated anchorage is affected, leading to modulate neural stem cell quiescence. Plays a role in cell-to-cell junction formation between pancreatic beta cells and neural crest stem (NCS) cells, promoting the formation of processes by NCS cells. CDH2 may be involved in neuronal recognition mechanism. In hippocampal neurons, may regulate dendritic spine density. The polypeptide is Cadherin-2 (CDH2) (Rhinolophus ferrumequinum (Greater horseshoe bat)).